The primary structure comprises 140 residues: uncharacterized protein (140 aa).

A run of 3 helical transmembrane segments spans residues 20–42 (ILYY…YVSG), 88–110 (FVAL…PVLL), and 115–137 (IIYT…GLLQ).

The protein localises to the cell membrane. This is an uncharacterized protein from Archaeoglobus fulgidus (strain ATCC 49558 / DSM 4304 / JCM 9628 / NBRC 100126 / VC-16).